We begin with the raw amino-acid sequence, 307 residues long: Protoheme IX farnesyltransferase (307 aa).

Helical transmembrane passes span 28–48 (LVIF…NPIL), 50–70 (FTAI…NQWW), 99–117 (FGIL…AINW), 121–138 (IILA…TIWL), 146–166 (IVIG…AVTG), 173–193 (VLLF…LALF), 219–239 (ILVY…IGAT), 241–261 (AIYG…SVPV), and 278–298 (LFGF…ADRY).

This sequence belongs to the UbiA prenyltransferase family. Protoheme IX farnesyltransferase subfamily.

It localises to the cell inner membrane. The enzyme catalyses heme b + (2E,6E)-farnesyl diphosphate + H2O = Fe(II)-heme o + diphosphate. It participates in porphyrin-containing compound metabolism; heme O biosynthesis; heme O from protoheme: step 1/1. Its function is as follows. Converts heme B (protoheme IX) to heme O by substitution of the vinyl group on carbon 2 of heme B porphyrin ring with a hydroxyethyl farnesyl side group. This Erythrobacter litoralis (strain HTCC2594) protein is Protoheme IX farnesyltransferase.